We begin with the raw amino-acid sequence, 339 residues long: Outer membrane protein assembly factor BamC (339 aa).

Positions 1–19 (MKFSRQLVLGSLAVLVLSA) are cleaved as a signal peptide. The N-palmitoyl cysteine moiety is linked to residue C20. A lipid anchor (S-diacylglycerol cysteine) is attached at C20.

It belongs to the BamC family. As to quaternary structure, part of the Bam complex.

The protein resides in the cell outer membrane. Part of the outer membrane protein assembly complex, which is involved in assembly and insertion of beta-barrel proteins into the outer membrane. The sequence is that of Outer membrane protein assembly factor BamC from Vibrio cholerae serotype O1 (strain ATCC 39315 / El Tor Inaba N16961).